A 407-amino-acid chain; its full sequence is MASLPLGPQPHALAPPLQLHDGDALKRRPELDSDKEMSAAVIEGNDAVTGHIISTTIGGKNGEPKQTISYMAERVVGTGSFGIVFQAKCLETGESVAIKKVLQDRRYKNRELQLMRPMDHPNVISLKHCFFSTTSRDELFLNLVMEYVPETLYRVLRHYTSSNQRMPIFYVKLYTYQIFRGLAYIHTVPGVCHRDVKPQNLLVDPLTHQVKLCDFGSAKVLVKGEPNISYICSRYYRAPELIFGATEYTASIDIWSAGCVLAELLLGQPLFPGENSVDQLVEIIKVLGTPTREEIRCMNPNYTDFRFPQIKAHPWHKVFHKRMPPEAIDLASRLLQYSPSLRCTALEACAHPFFNELREPNARLPNGRPLPPLFNFKQELGGASMELINRLIPEHVRRQMSTGLQNS.

The segment covering 1-19 (MASLPLGPQPHALAPPLQL) has biased composition (low complexity). Residues 1-23 (MASLPLGPQPHALAPPLQLHDGD) form a disordered region. A2 carries the post-translational modification N-acetylalanine. One can recognise a Protein kinase domain in the interval 70–354 (YMAERVVGTG…ALEACAHPFF (285 aa)). ATP-binding positions include 76–84 (VGTGSFGIV) and K99. Catalysis depends on D195, which acts as the Proton acceptor. A Phosphotyrosine modification is found at Y230.

This sequence belongs to the protein kinase superfamily. CMGC Ser/Thr protein kinase family. GSK-3 subfamily. As to quaternary structure, binds to KIB1. Interacts with BSK6. In terms of processing, autophosphorylated mainly on threonine and serine residues.

It carries out the reaction L-seryl-[protein] + ATP = O-phospho-L-seryl-[protein] + ADP + H(+). It catalyses the reaction L-threonyl-[protein] + ATP = O-phospho-L-threonyl-[protein] + ADP + H(+). In terms of biological role, phosphorylates BSK1, BSK3, BSK5, BSK6, BSK8 and BSK11 in vitro. May mediate extracellular signals to regulate transcription in differentiating cells. This chain is Shaggy-related protein kinase iota (ASK9), found in Arabidopsis thaliana (Mouse-ear cress).